Reading from the N-terminus, the 179-residue chain is MAKADKATAVADIAEKFKESTATVVTEYRGLTVSNLAELRRSLGSSTTYTVAKNTLVKRAAAEAGIEGLDELFVGPTAIAFIEGEPVDAAKALKKFAKDNKALVVKGGYMDGRALSVSEVERIADLESREVLLSKFAGALKAKQSQAAALFVAPASQVARLAAALQEKKSAGDSAESAA.

This sequence belongs to the universal ribosomal protein uL10 family. In terms of assembly, part of the ribosomal stalk of the 50S ribosomal subunit. The N-terminus interacts with L11 and the large rRNA to form the base of the stalk. The C-terminus forms an elongated spine to which L12 dimers bind in a sequential fashion forming a multimeric L10(L12)X complex.

In terms of biological role, forms part of the ribosomal stalk, playing a central role in the interaction of the ribosome with GTP-bound translation factors. The chain is Large ribosomal subunit protein uL10 from Mycolicibacterium gilvum (strain PYR-GCK) (Mycobacterium gilvum (strain PYR-GCK)).